The primary structure comprises 226 residues: UPF0111 protein HI_1603 (226 aa).

Belongs to the UPF0111 family.

The sequence is that of UPF0111 protein HI_1603 from Haemophilus influenzae (strain ATCC 51907 / DSM 11121 / KW20 / Rd).